Reading from the N-terminus, the 200-residue chain is Peroxiredoxin (200 aa).

In terms of domain architecture, Thioredoxin spans Ala6–His165. Cys52 acts as the Cysteine sulfenic acid (-SOH) intermediate in catalysis.

It belongs to the peroxiredoxin family. AhpC/Prx1 subfamily. Homodimer; disulfide-linked, upon oxidation.

It catalyses the reaction a hydroperoxide + [thioredoxin]-dithiol = an alcohol + [thioredoxin]-disulfide + H2O. In terms of biological role, thiol-specific peroxidase that catalyzes the reduction of hydrogen peroxide and organic hydroperoxides to water and alcohols, respectively. Plays a role in cell protection against oxidative stress by detoxifying peroxides and as sensor of hydrogen peroxide-mediated signaling events. In Cynops pyrrhogaster (Japanese fire-bellied newt), this protein is Peroxiredoxin.